The following is a 114-amino-acid chain: UPF0342 protein LCABL_19440 (114 aa).

It belongs to the UPF0342 family.

This Lacticaseibacillus casei (strain BL23) (Lactobacillus casei) protein is UPF0342 protein LCABL_19440.